A 274-amino-acid chain; its full sequence is Energy-coupling factor transporter ATP-binding protein EcfA1 (274 aa).

Positions 11–245 (IELKNVKFKY…ERVIEIAKID (235 aa)) constitute an ABC transporter domain. 45-52 (GHNGSGKS) is a binding site for ATP.

The protein belongs to the ABC transporter superfamily. Energy-coupling factor EcfA family. As to quaternary structure, forms a stable energy-coupling factor (ECF) transporter complex composed of 2 membrane-embedded substrate-binding proteins (S component), 2 ATP-binding proteins (A component) and 2 transmembrane proteins (T component).

It is found in the cell membrane. Functionally, ATP-binding (A) component of a common energy-coupling factor (ECF) ABC-transporter complex. Unlike classic ABC transporters this ECF transporter provides the energy necessary to transport a number of different substrates. In Mycoplasma mobile (strain ATCC 43663 / 163K / NCTC 11711) (Mesomycoplasma mobile), this protein is Energy-coupling factor transporter ATP-binding protein EcfA1.